Consider the following 149-residue polypeptide: Putative pre-16S rRNA nuclease (149 aa).

The protein belongs to the YqgF nuclease family.

Its subcellular location is the cytoplasm. Its function is as follows. Could be a nuclease involved in processing of the 5'-end of pre-16S rRNA. The protein is Putative pre-16S rRNA nuclease of Burkholderia vietnamiensis (strain G4 / LMG 22486) (Burkholderia cepacia (strain R1808)).